The chain runs to 525 residues: Mitochondrial-processing peptidase subunit alpha (525 aa).

Residues 1–33 (MAAMVLAATRLLRGSGSWGRSRPRFGDPAYRRF) constitute a mitochondrion transit peptide. An N6-succinyllysine modification is found at K64. The residue at position 299 (K299) is an N6-acetyllysine.

It belongs to the peptidase M16 family. Heterodimer of PMPCA (alpha) and PMPCB (beta) subunits, forming the mitochondrial processing protease (MPP) in which PMPCA is involved in substrate recognition and binding and PMPCB is the catalytic subunit.

The protein resides in the mitochondrion matrix. Its subcellular location is the mitochondrion inner membrane. In terms of biological role, substrate recognition and binding subunit of the essential mitochondrial processing protease (MPP), which cleaves the mitochondrial sequence off newly imported precursors proteins. This is Mitochondrial-processing peptidase subunit alpha (PMPCA) from Bos taurus (Bovine).